Here is a 144-residue protein sequence, read N- to C-terminus: MRLNTLSPAEGAKHAPKRVGRGIGSGLGKTAGRGHKGQNSRSGGGVRRGFEGGQMPLYRRLPKFGFTSRKAMITAEVRLSELALVEGDVIDLNTLKAANVVGTQIEFAKVMLSGEITRAVTLRGLRVTKGARAAIEAAGGKIEE.

The interval 1–52 is disordered; sequence MRLNTLSPAEGAKHAPKRVGRGIGSGLGKTAGRGHKGQNSRSGGGVRRGFEG. Residues 21–31 show a composition bias toward gly residues; the sequence is RGIGSGLGKTA.

This sequence belongs to the universal ribosomal protein uL15 family. In terms of assembly, part of the 50S ribosomal subunit.

Binds to the 23S rRNA. The polypeptide is Large ribosomal subunit protein uL15 (Yersinia enterocolitica serotype O:8 / biotype 1B (strain NCTC 13174 / 8081)).